A 678-amino-acid chain; its full sequence is MESMTPISCPTTPRWNQDRPFLTGRFHQETRASSKFADSKRFTLDSSSSGVEQAIGCYDTPVQELIVIDDLLSALVGIEGRYISIKRFHGKEDSIAFQVDPSMDLALQELAKRIFPLCEYYLLIDQFVESSSQFKNGLVNHAFAAALRALLLDYQAMVAQLEHQFRLGRLSIQGLWFYCQPMMGSMRALAAVIQQASTKQFVGSGVLNLLQSQAKAMAGDNSVRSLLEKMTECASNAYLSILERWVYEGIIDDPYGEFFIAENRSLKKESLSQDSTAKYWSQRYSLKDTIPGFLANIAATILTTGKYLNVMRECGHNVQVPISERSKLTIFGSNHHYLECIKAAHEFASIELVNLIKDKYDLVGRLRSIKHYLLLDQGDFLVHFMDIAREELNKKVHEISVEKLQSLLDLALRTTAAAADPRHEDLTCCVDRASLLTTLGMHKDTDSNSIEDPMSITGLETFSLSYKVQWPLSIVISKKALSKYQLIFRFLFHCKHVERQLCGAWQIHQGIRSMNSKGTAILRSSLLCRSMLKFISSLLHYLTFEVLEPNWHVMHDRLQSTRSVDEVIQHHDFFLDKCLRGCLLLLPDVLKKMEKLKSVCLQYAAATQWLISSSIDINSQSHPQKTMIRDTTVTESIFNFEREFNSELQSLGPVLSKGSQAEPYLTHLSQWILGVSKE.

Triggers nucleus envelope localization regions lie at residues 63-116 (QELI…RIFP), 118-180 (CEYY…FYCQ), 290-318 (IPGFLANIAATILTTGKYLNVMRECGHNV), 472-548 (LSIV…EVLE), and 587-622 (PDVLKKMEKLKSVCLQYAAATQWLISSSIDINSQSH).

It belongs to the TUBGCP family. In terms of assembly, part of the gamma-tubulin complex. Gamma-tubulin complex is composed of gamma-tubulin and GCP proteins (e.g. GCP2 and GCP3). Interacts directly with GCP3.

The protein resides in the cytoplasm. It localises to the cytoskeleton. Its subcellular location is the microtubule organizing center. It is found in the nucleus envelope. The protein localises to the cell cortex. Functionally, gamma-tubulin complex is necessary for microtubule nucleation at the microtubule organizing centers (MTOCs). Required for the positioning of the gamma-tubulin-containing complex on pre-existing microtubules and for the proper organization of cortical arrays. This chain is Gamma-tubulin complex component 2 (GCP2), found in Arabidopsis thaliana (Mouse-ear cress).